The primary structure comprises 61 residues: Large ribosomal subunit protein bL32 (61 aa).

Residues Met1–Lys44 are disordered. Basic residues predominate over residues Arg7 to Arg16. The segment covering Asn25 to Gly34 has biased composition (polar residues).

This sequence belongs to the bacterial ribosomal protein bL32 family.

The sequence is that of Large ribosomal subunit protein bL32 from Acinetobacter baylyi (strain ATCC 33305 / BD413 / ADP1).